The primary structure comprises 242 residues: MTLPWNTFPGSTVPPVVPSVEDIIRMLVAGQQKIAIQNLLQSQSKEQVNGTSHDLQNWLTSLCISPSSSPTPSNASTSTIPAQMTNENVLHLQIQSQLFSNLGTPWFLNPEQHNKTNNAIRKRPKKEFICKYCARHFTKSYNLMIHERTHTNERPFHCETCGKSFRRQDHLRDHKYIHAKEKPHKCEICGKGFCQLRTLNVHRSCHHVQEPISETFMLGAIKFGKADSLLIDAEPLIDVTTI.

3 consecutive C2H2-type zinc fingers follow at residues 128–150, 156–178, and 184–207; these read FICK…ERTH, FHCE…KYIH, and HKCE…SCHH.

It belongs to the Odd C2H2-type zinc-finger protein family.

The protein resides in the nucleus. Its function is as follows. May function as transcription regulator. Essential for larval development. Required for morphogenesis and function of the digestive tract. This is Protein odd-skipped-related 1 from Caenorhabditis elegans.